Reading from the N-terminus, the 90-residue chain is MAEKFNLQDRFLNHLRVNKIEVKVYLVNGFQTKGFIRSFDSYTVLLESGNQQSLIYKHAISTIIPSSYVMLMPRKQEPEKEDETPEDQGS.

One can recognise a Sm domain in the interval 9–69 (DRFLNHLRVN…ISTIIPSSYV (61 aa)).

Belongs to the Hfq family. Homohexamer.

Functionally, RNA chaperone that binds small regulatory RNA (sRNAs) and mRNAs to facilitate mRNA translational regulation in response to envelope stress, environmental stress and changes in metabolite concentrations. Also binds with high specificity to tRNAs. This chain is RNA-binding protein Hfq, found in Thermotoga sp. (strain RQ2).